The following is a 278-amino-acid chain: Dehydrogenase/reductase SDR family member 4 (278 aa).

36 to 60 lines the NADP(+) pocket; sequence LVTASTDGIGFAIARRLAQDGAHVV. The residue at position 92 (lysine 92) is an N6-acetyllysine; alternate. Lysine 92 carries the post-translational modification N6-succinyllysine; alternate. The residue at position 105 (lysine 105) is an N6-acetyllysine. Isoleucine 140 is subject to Phosphoserine. Residue serine 169 coordinates substrate. The active-site Proton acceptor is the tyrosine 182. Lysine 186 provides a ligand contact to NADP(+). Lysine 216 carries the post-translational modification N6-acetyllysine; alternate. Residue lysine 216 is modified to N6-succinyllysine; alternate. Serine 220 bears the Phosphoserine mark. N6-succinyllysine is present on residues lysine 227 and lysine 234. The Peroxisomal targeting signal motif lies at 276–278; it reads SRL.

The protein belongs to the short-chain dehydrogenases/reductases (SDR) family. In terms of assembly, homotetramer. As to expression, predominantly expressed in normal cervix (at protein level). Expressed in some neoplastic cervical tissues, but not in normal cervix (at protein level). In terms of tissue distribution, expressed in a few neoplastic cervical tissues. As to expression, high expression in liver.

It localises to the peroxisome. The protein resides in the nucleus. The catalysed reaction is a secondary alcohol + NADP(+) = a ketone + NADPH + H(+). It catalyses the reaction 3beta-hydroxy-5beta-pregnane-20-one + NADP(+) = 5beta-pregnan-3,20-dione + NADPH + H(+). The enzyme catalyses 5beta-dihydrotestosterone + NADPH + H(+) = 5beta-androstane-3beta,17beta-diol + NADP(+). It carries out the reaction 5beta-androstane-3,17-dione + NADPH + H(+) = 3beta-hydroxy-5beta-androstane-17-one + NADP(+). The catalysed reaction is isatin + NADPH + H(+) = 3-hydroxyindolin-2-one + NADP(+). It catalyses the reaction lithocholate + NADP(+) = 3-oxo-5beta-cholan-24-oate + NADPH + H(+). The enzyme catalyses 3-oxo-5beta-cholan-24-oate + NADPH + H(+) = isolithocholate + NADP(+). Its activity is regulated as follows. Inhibited by flavonoids (quercetin and genistein), cetylpyridium chloride, phenylhexane and valproic acid. Low inhibition is observed with fatty acids (myristic acid and lauric acid). No significant inhibition is observed with barbital, dicumarol, indomethacin, metyrapone, ethacrynic acid, disulfiram, hexestrol and benzodiazepines (diazepam and nitrazepam). Functionally, NADPH-dependent oxidoreductase which catalyzes the reduction of a variety of compounds bearing carbonyl groups including ketosteroids, alpha-dicarbonyl compounds, aldehydes, aromatic ketones and quinones. Reduces 3-ketosteroids and benzil into 3beta-hydroxysteroids and R-benzoin, respectively, in contrast to the stereoselectivity of non-primate DHRS4s which produce 3alpha-hydroxysteroids and S-benzoin. Diplays low activity toward all-trans-retinal and no activity toward 9-cis-retinal as compared to non-primate mammals. In the reverse reaction, catalyze the NAD-dependent oxidation of 3beta-hydroxysteroids and alcohol, but with much lower efficiency. Involved in the metabolism of 3beta-hydroxysteroids, isatin and xenobiotic carbonyl compounds. Its function is as follows. No detected catalytic activity in vitro, possibly due to the lack of catalytic site. NADPH-dependent oxidoreductase which catalyzes the reduction of a variety of compounds bearing carbonyl groups including ketosteroids, alpha-dicarbonyl compounds, aldehydes, aromatic ketones and quinones. Involved in the metabolism of 3beta-hydroxysteroids, isatin and xenobiotic carbonyl compounds. Has a higher catalytic activity for xenobiotic alpha-dicarbonyl compounds, sucha as benzil, than isoform 1 and is involved in benzil detoxification. The protein is Dehydrogenase/reductase SDR family member 4 of Homo sapiens (Human).